Reading from the N-terminus, the 116-residue chain is Spermadhesin Z13 (116 aa).

2 disulfide bridges follow: C14–C35 and C58–C79. The CUB domain occupies 14 to 115; the sequence is CGDLYGEEYG…PDFFLIFRRV (102 aa).

Belongs to the spermadhesin family. As to quaternary structure, homodimer; disulfide-linked. Seminal plasma.

The protein localises to the secreted. May be involved in the fertilization process. The chain is Spermadhesin Z13 from Bos taurus (Bovine).